We begin with the raw amino-acid sequence, 605 residues long: Bifunctional purine biosynthesis protein ADE16 (605 aa).

One can recognise an MGS-like domain in the interval 1-147 (MSSEAPIALL…KNHGRVSIIS (147 aa)). IMP contacts are provided by residues 35 to 38 (SGGT), 65 to 68 (RVKT), 102 to 103 (CN), and 126 to 127 (DI). Lys138 serves as the catalytic Proton donor/acceptor; for FAICAR cyclization activity. Residues 219 to 220 (RY), His279, Gly327, Asp350, Asn442, and Arg462 contribute to the 5-amino-1-(5-phospho-beta-D-ribosyl)imidazole-4-carboxamide site. The Proton acceptor; for AICAR formyltransferase activity role is filled by His279. Ile463 is a (6R)-10-formyltetrahydrofolate binding site. Residue Phe554 coordinates 5-amino-1-(5-phospho-beta-D-ribosyl)imidazole-4-carboxamide. Asp559 contributes to the (6R)-10-formyltetrahydrofolate binding site. Position 601 (Arg601) interacts with 5-amino-1-(5-phospho-beta-D-ribosyl)imidazole-4-carboxamide.

Belongs to the PurH family. Homodimer.

The protein localises to the cytoplasm. It is found in the cytosol. The catalysed reaction is (6R)-10-formyltetrahydrofolate + 5-amino-1-(5-phospho-beta-D-ribosyl)imidazole-4-carboxamide = 5-formamido-1-(5-phospho-D-ribosyl)imidazole-4-carboxamide + (6S)-5,6,7,8-tetrahydrofolate. The enzyme catalyses IMP + H2O = 5-formamido-1-(5-phospho-D-ribosyl)imidazole-4-carboxamide. Its pathway is purine metabolism; IMP biosynthesis via de novo pathway; 5-formamido-1-(5-phospho-D-ribosyl)imidazole-4-carboxamide from 5-amino-1-(5-phospho-D-ribosyl)imidazole-4-carboxamide (10-formyl THF route): step 1/1. It functions in the pathway purine metabolism; IMP biosynthesis via de novo pathway; IMP from 5-formamido-1-(5-phospho-D-ribosyl)imidazole-4-carboxamide: step 1/1. Functionally, bifunctional enzyme that catalyzes the last two steps of purine biosynthesis. Acts as a transformylase that incorporates a formyl group to the AMP analog AICAR (5-amino-1-(5-phospho-beta-D-ribosyl)imidazole-4-carboxamide) to produce the intermediate formyl-AICAR (FAICAR). Also catalyzes the cyclization of FAICAR to IMP. The chain is Bifunctional purine biosynthesis protein ADE16 from Cryptococcus neoformans var. grubii serotype A (strain H99 / ATCC 208821 / CBS 10515 / FGSC 9487) (Filobasidiella neoformans var. grubii).